The following is a 155-amino-acid chain: Small ribosomal subunit protein uS7cz/uS7cy (155 aa).

Belongs to the universal ribosomal protein uS7 family. In terms of assembly, part of the 30S ribosomal subunit.

The protein localises to the plastid. The protein resides in the chloroplast. In terms of biological role, one of the primary rRNA binding proteins, it binds directly to 16S rRNA where it nucleates assembly of the head domain of the 30S subunit. This Phalaenopsis aphrodite subsp. formosana (Moth orchid) protein is Small ribosomal subunit protein uS7cz/uS7cy (rps7-A).